The chain runs to 209 residues: Uracil phosphoribosyltransferase (209 aa).

5-phospho-alpha-D-ribose 1-diphosphate-binding positions include R79, R104, and 131-139 (DPMLATGGS). Uracil-binding positions include I194 and 199-201 (GDA). A 5-phospho-alpha-D-ribose 1-diphosphate-binding site is contributed by D200.

This sequence belongs to the UPRTase family. Requires Mg(2+) as cofactor.

The enzyme catalyses UMP + diphosphate = 5-phospho-alpha-D-ribose 1-diphosphate + uracil. Its pathway is pyrimidine metabolism; UMP biosynthesis via salvage pathway; UMP from uracil: step 1/1. Its activity is regulated as follows. Allosterically activated by GTP. Functionally, catalyzes the conversion of uracil and 5-phospho-alpha-D-ribose 1-diphosphate (PRPP) to UMP and diphosphate. The polypeptide is Uracil phosphoribosyltransferase (Exiguobacterium sibiricum (strain DSM 17290 / CCUG 55495 / CIP 109462 / JCM 13490 / 255-15)).